The sequence spans 506 residues: Deoxyguanosinetriphosphate triphosphohydrolase (506 aa).

Positions 66–274 (RLTHSLEVQQ…MEAADDISYC (209 aa)) constitute an HD domain.

The protein belongs to the dGTPase family. Type 1 subfamily. In terms of assembly, homotetramer. The cofactor is Mg(2+).

The enzyme catalyses dGTP + H2O = 2'-deoxyguanosine + triphosphate + H(+). DGTPase preferentially hydrolyzes dGTP over the other canonical NTPs. This Yersinia pestis bv. Antiqua (strain Antiqua) protein is Deoxyguanosinetriphosphate triphosphohydrolase.